The primary structure comprises 252 residues: MAYQSELGGDSSPLRKSGRGKIEIKRIENTTNRQVTFCKRRNGLLKKAYELSVLCDAEVALIVFSSRGRLYEYSNNSVKGTIERYKKAISDNSNTGSVAEINAQYYQQESAKLRQQIISIQNSNRQLMGETIGSMSPKELRNLEGRLERSITRIRSKKNELLFSEIDYMQKREVDLHNDNQILRAKIAENERNNPSISLMPGGSNYEQLMPPPQTQSQPFDSRNYFQVAALQPNNHHYSSAGRQDQTALQLV.

Positions methionine 1–glycine 20 are disordered. One can recognise an MADS-box domain in the interval arginine 19 to tyrosine 73. Residues alanine 99–isoleucine 166 are a coiled coil. In terms of domain architecture, K-box spans alanine 103–asparagine 193.

In terms of assembly, homodimer, capable of binding to CArG-box sequences. Forms a heterodimer via the K-box domain with either SEPALATTA1/AGL2, SEPALATTA2/AGL4, SEPALLATA3/AGL9 or AGL6. Heterodimerization also seen with some other Agamous-like MADS-box proteins. Interacts with AGL15 and AGL16. Component of a complex made of FLOR1, VSP1 and AGAMOUS (AG). Binds directly with FLR1. As to expression, detected early in the floral meristem but mostly expressed in stamen and carpel primordia.

The protein resides in the nucleus. Functionally, probable transcription factor involved in the control of organ identity during the early development of flowers. Is required for normal development of stamens and carpels in the wild-type flower. Plays a role in maintaining the determinacy of the floral meristem. Acts as C class cadastral protein by repressing the A class floral homeotic genes like APETALA1. Forms a heterodimer via the K-box domain with either SEPALATTA1/AGL2, SEPALATTA2/AGL4, SEPALLATA3/AGL9 or AGL6 that could be involved in genes regulation during floral meristem development. Controls AHL21/GIK, a multifunctional chromatin modifier in reproductive organ patterning and differentiation. Induces microsporogenesis through the activation of SPL/NZZ. The chain is Floral homeotic protein AGAMOUS (AG) from Arabidopsis thaliana (Mouse-ear cress).